We begin with the raw amino-acid sequence, 77 residues long: MIDLIGSKIKVLGHSDPSLIGREGIILFETKKTFLIQTQNKIIRVLKSNGIFEIYSENRKVILPGSKLVGRIEKRWL.

The protein belongs to the eukaryotic/archaeal RNase P protein component 1 family. As to quaternary structure, consists of a catalytic RNA component and at least 4-5 protein subunits.

The protein localises to the cytoplasm. The enzyme catalyses Endonucleolytic cleavage of RNA, removing 5'-extranucleotides from tRNA precursor.. In terms of biological role, part of ribonuclease P, a protein complex that generates mature tRNA molecules by cleaving their 5'-ends. This is Ribonuclease P protein component 1 from Sulfurisphaera tokodaii (strain DSM 16993 / JCM 10545 / NBRC 100140 / 7) (Sulfolobus tokodaii).